Here is a 334-residue protein sequence, read N- to C-terminus: D-fructose 1,6-bisphosphatase class 2/sedoheptulose 1,7-bisphosphatase (334 aa).

The Mn(2+) site is built by Asp-33, Glu-57, Asp-85, and Glu-88. Substrate contacts are provided by residues Glu-88 to Thr-90, Tyr-119, Arg-164 to Arg-166, and Asp-186 to Asp-188. Residue Glu-213 participates in Mn(2+) binding.

Belongs to the FBPase class 2 family. Homotetramer. Mn(2+) serves as cofactor.

It catalyses the reaction beta-D-fructose 1,6-bisphosphate + H2O = beta-D-fructose 6-phosphate + phosphate. The enzyme catalyses D-sedoheptulose 1,7-bisphosphate + H2O = D-sedoheptulose 7-phosphate + phosphate. It participates in carbohydrate biosynthesis; Calvin cycle. Functionally, catalyzes the hydrolysis of fructose 1,6-bisphosphate (Fru 1,6-P2) and sedoheptulose 1,7-bisphosphate (Sed 1,7-P2) to fructose 6-phosphate and sedoheptulose 7-phosphate, respectively. This Prochlorococcus marinus (strain MIT 9313) protein is D-fructose 1,6-bisphosphatase class 2/sedoheptulose 1,7-bisphosphatase.